The sequence spans 433 residues: Zinc finger and SCAN domain-containing protein 4 (433 aa).

In terms of domain architecture, SCAN box spans 44 to 126 (RMVLNSFQDS…RFIEDLTDDS (83 aa)). Composition is skewed to polar residues over residues 165–185 (TTREANMGTPSQTSQDTSLET), 195–210 (GWNSSSKTTRVNENIT), and 277–299 (QPEQSSPESALTHQSNEGNSTCE). Disordered stretches follow at residues 165-210 (TTRE…ENIT) and 275-301 (ISQPEQSSPESALTHQSNEGNSTCEVH). 4 consecutive C2H2-type zinc fingers follow at residues 312–334 (YKCEECPKVFKYLCHLLAHQRRH), 340–362 (FVCPECQKGFFQISDLRVHQIIH), 368–390 (FTCSMCKKSFSHKTNLRSHERIH), and 396–418 (YTCPFCKTSYRQSSTYHRHMRTH).

Its subcellular location is the nucleus. The protein localises to the chromosome. It is found in the telomere. Its function is as follows. Embryonic stem (ES) cell-specific transcription factor required to regulate ES cell pluripotency. Binds telomeres and plays a key role in genomic stability in ES cells by regulating telomere elongation. Acts as an activator of spontaneous telomere sister chromatid exchange (T-SCE) and telomere elongation in undifferentiated ES cells. This is Zinc finger and SCAN domain-containing protein 4 (ZSCAN4) from Homo sapiens (Human).